The primary structure comprises 444 residues: N-succinylarginine dihydrolase (444 aa).

Substrate is bound by residues 19–28 (AGLSFGNVAS), Asn110, and 137–138 (HR). Glu174 is an active-site residue. Arg214 contacts substrate. His250 is an active-site residue. Substrate contacts are provided by Asp252 and Asn362. Catalysis depends on Cys368, which acts as the Nucleophile.

It belongs to the succinylarginine dihydrolase family. As to quaternary structure, homodimer.

The catalysed reaction is N(2)-succinyl-L-arginine + 2 H2O + 2 H(+) = N(2)-succinyl-L-ornithine + 2 NH4(+) + CO2. The protein operates within amino-acid degradation; L-arginine degradation via AST pathway; L-glutamate and succinate from L-arginine: step 2/5. In terms of biological role, catalyzes the hydrolysis of N(2)-succinylarginine into N(2)-succinylornithine, ammonia and CO(2). The protein is N-succinylarginine dihydrolase of Shewanella frigidimarina (strain NCIMB 400).